The sequence spans 513 residues: Histidine ammonia-lyase (513 aa).

The segment at residues 144–146 is a cross-link (5-imidazolinone (Ala-Gly)); it reads ASG. At serine 145 the chain carries 2,3-didehydroalanine (Ser).

The protein belongs to the PAL/histidase family. In terms of processing, contains an active site 4-methylidene-imidazol-5-one (MIO), which is formed autocatalytically by cyclization and dehydration of residues Ala-Ser-Gly.

It localises to the cytoplasm. The catalysed reaction is L-histidine = trans-urocanate + NH4(+). The protein operates within amino-acid degradation; L-histidine degradation into L-glutamate; N-formimidoyl-L-glutamate from L-histidine: step 1/3. The sequence is that of Histidine ammonia-lyase from Streptococcus pyogenes serotype M1.